The primary structure comprises 419 residues: Tyrosine--tRNA ligase (419 aa).

Y34 contributes to the L-tyrosine binding site. The 'HIGH' region signature appears at P39–H48. L-tyrosine is bound by residues Y168 and Q172. Positions K230–S234 match the 'KMSKS' region motif. Position 233 (K233) interacts with ATP. The S4 RNA-binding domain occupies A352–Y418.

The protein belongs to the class-I aminoacyl-tRNA synthetase family. TyrS type 1 subfamily. As to quaternary structure, homodimer.

It is found in the cytoplasm. The enzyme catalyses tRNA(Tyr) + L-tyrosine + ATP = L-tyrosyl-tRNA(Tyr) + AMP + diphosphate + H(+). Functionally, catalyzes the attachment of tyrosine to tRNA(Tyr) in a two-step reaction: tyrosine is first activated by ATP to form Tyr-AMP and then transferred to the acceptor end of tRNA(Tyr). The polypeptide is Tyrosine--tRNA ligase (Listeria monocytogenes serotype 4b (strain F2365)).